Here is a 60-residue protein sequence, read N- to C-terminus: Ribosome modulation factor (60 aa).

Belongs to the ribosome modulation factor family.

The protein localises to the cytoplasm. Functionally, during stationary phase, converts 70S ribosomes to an inactive dimeric form (100S ribosomes). This is Ribosome modulation factor from Kangiella koreensis (strain DSM 16069 / JCM 12317 / KCTC 12182 / SW-125).